A 122-amino-acid chain; its full sequence is Large ribosomal subunit protein uL14 (122 aa).

It belongs to the universal ribosomal protein uL14 family. As to quaternary structure, part of the 50S ribosomal subunit. Forms a cluster with proteins L3 and L19. In the 70S ribosome, L14 and L19 interact and together make contacts with the 16S rRNA in bridges B5 and B8.

Functionally, binds to 23S rRNA. Forms part of two intersubunit bridges in the 70S ribosome. In Nitrosococcus oceani (strain ATCC 19707 / BCRC 17464 / JCM 30415 / NCIMB 11848 / C-107), this protein is Large ribosomal subunit protein uL14.